The primary structure comprises 1156 residues: Reverse gyrase 1 (1156 aa).

The segment at 1–38 (MLKVYYTFGCPNCGGPIDDEHLLAGVPCSKCLPGRVEN) adopts an RG N-terminal-type zinc-finger fold. Positions 10, 13, 28, and 31 each coordinate Zn(2+). ATP contacts are provided by residues Gln86 and 103–110 (APTGLGKT). Residues 90–277 (IKRLAKSESF…ALRTLIGFEP (188 aa)) enclose the Helicase ATP-binding domain. A DEAD box motif is present at residues 184–187 (DDSD). A topoisomerase I region spans residues 570–1156 (INIKTILLIV…VNSLKLDTNV (587 aa)). In terms of domain architecture, Toprim spans 574 to 736 (TILLIVESPT…NIYRIKYHEI (163 aa)). Position 580 (Glu580) interacts with Mg(2+). An RG C-terminal-type zinc finger spans residues 655-682 (IYKCYNCGKTFTIKSNTCPYCGSVFISS). Residues Cys658, Cys661, Cys672, and Cys675 each coordinate Zn(2+). Residue Asp705 coordinates Mg(2+). Positions 752-1143 (NMNLVKSQIV…DLHKEITQIS (392 aa)) constitute a Topo IA-type catalytic domain. Tyr895 acts as the O-(5'-phospho-DNA)-tyrosine intermediate in catalysis.

This sequence in the N-terminal section; belongs to the DEAD box helicase family. DDVD subfamily. It in the C-terminal section; belongs to the type IA topoisomerase family. As to quaternary structure, monomer. The cofactor is Zn(2+). Mg(2+) serves as cofactor.

The protein resides in the cytoplasm. It catalyses the reaction ATP + H2O = ADP + phosphate + H(+). In terms of biological role, modifies the topological state of DNA by introducing positive supercoils in an ATP-dependent process, increasing the linking number in steps of +1. Binds to single-stranded DNA, transiently cleaves and then rejoins the ends, introducing a positive supercoil in the process. The scissile phosphodiester is attacked by the catalytic tyrosine of the enzyme, resulting in the formation of a DNA-(5'-phosphotyrosyl)-enzyme intermediate. Probably involved in rewinding DNA strands in regions of the chromosome that have opened up to allow replication, transcription, DNA repair and/or for DNA protection. This is Reverse gyrase 1 from Sulfurisphaera tokodaii (strain DSM 16993 / JCM 10545 / NBRC 100140 / 7) (Sulfolobus tokodaii).